Consider the following 1127-residue polypeptide: Elongation factor-like GTPase 1 (1127 aa).

A tr-type G domain is found at Ala17 to Tyr272. Residues Ala26 to Thr33, Asp92 to His96, and Asn146 to Asp149 each bind GTP. Residues Lys429–Ser496 are disordered. Composition is skewed to basic and acidic residues over residues Met438–Lys452 and Ser474–Glu484. Position 528 is an N6-acetyllysine (Lys528).

It belongs to the TRAFAC class translation factor GTPase superfamily. Classic translation factor GTPase family. As to quaternary structure, associates with the 60S ribosomal subunit. Found in a complex consisting of the 60S ribosomal subunit, SBDS and EFL1.

The catalysed reaction is GTP + H2O = GDP + phosphate + H(+). With respect to regulation, GTPase activity is stimulated in the presence of 60S ribosome subunits. Its function is as follows. GTPase involved in the biogenesis of the 60S ribosomal subunit and translational activation of ribosomes. Together with SBDS, triggers the GTP-dependent release of EIF6 from 60S pre-ribosomes in the cytoplasm, thereby activating ribosomes for translation competence by allowing 80S ribosome assembly and facilitating EIF6 recycling to the nucleus, where it is required for 60S rRNA processing and nuclear export. The sequence is that of Elongation factor-like GTPase 1 (Efl1) from Mus musculus (Mouse).